We begin with the raw amino-acid sequence, 539 residues long: Chaperonin GroEL 2 (539 aa).

ATP is bound by residues 29–32, 86–90, G414, 479–481, and D495; these read TIGP, DGTTT, and DAL.

The protein belongs to the chaperonin (HSP60) family. Forms a cylinder of 14 subunits composed of two heptameric rings stacked back-to-back. Interacts with the co-chaperonin GroES.

Its subcellular location is the cytoplasm. It catalyses the reaction ATP + H2O + a folded polypeptide = ADP + phosphate + an unfolded polypeptide.. Functionally, together with its co-chaperonin GroES, plays an essential role in assisting protein folding. The GroEL-GroES system forms a nano-cage that allows encapsulation of the non-native substrate proteins and provides a physical environment optimized to promote and accelerate protein folding. The protein is Chaperonin GroEL 2 of Synechococcus sp. (strain JA-2-3B'a(2-13)) (Cyanobacteria bacterium Yellowstone B-Prime).